Here is a 386-residue protein sequence, read N- to C-terminus: MLTSPLSPFEHEDSNLLLSAEQLTQYGAFWTAKEISQQPKMWRKVSEQHSDNRTIAAWLTPILAKPQLRIILTGAGTSAYIGDVLAAHIQQHLPLATQQVEAISTTDIVSHPELYLRGNIPTLLISYGRSGNSPESMAAVELAEQLVDDCYHLAITCNGQGKLANYCADKSHCYLYKLPDETHDVSFAMTSSFTCMYLATLLIFAPNSQALMQCIEMAEHILTERLADIRLQSEQPSKRVVFLGGGPLKAIAQEAALKYLELTAGQVVSAFESPLGFRHGPKSLVDSHTQVLVMMSSDPYTRQYDNDLIQELKRDNQALSVLTLSEELLTGSSGLNEVWLGLPFILWCQILAIYKAIQLKVSPDNPCPTGQVNRVVQGVNVYPFVK.

SIS domains follow at residues 59–217 (LTPI…CIEM) and 222–366 (LTER…PDNP).

This sequence belongs to the SIS family. AgaS subfamily.

It localises to the cytoplasm. It carries out the reaction D-galactosamine 6-phosphate + H2O = D-tagatopyranose 1-phosphate + NH4(+). It catalyses the reaction alpha-D-glucosamine 6-phosphate + H2O = beta-D-fructose 6-phosphate + NH4(+). Functionally, involved in the pathway of N-acetyl-D-galactosamine degradation. Catalyzes the conversion of D-galactosamine 6-phosphate (GalN-6-P) to D-tagatofuranose 6-phosphate (Tag-6-P). It can also catalyze the conversion of D-glucosamine 6-phosphate. This is D-galactosamine-6-phosphate deaminase AgaS from Shewanella sp. (strain ANA-3).